The primary structure comprises 168 residues: Protein B-Myc (168 aa).

2 disordered regions span residues 26 to 94 (DDEE…DLPE) and 146 to 168 (EGASVSPAADVEPATPPDCTCNT). S59 and S67 each carry phosphoserine.

The protein resides in the nucleus. In terms of biological role, seems to act as an inhibitor of cellular proliferation. In Rattus norvegicus (Rat), this protein is Protein B-Myc (Mycb).